The sequence spans 415 residues: Probable carboxypeptidase ACLA_013260 (415 aa).

Positions 1 to 17 (MKFPWLLLVKGAASVAA) are cleaved as a signal peptide. N-linked (GlcNAc...) asparagine glycosylation is present at Asn97. Asp145 provides a ligand contact to Zn(2+). Glu177 functions as the Proton acceptor in the catalytic mechanism. Glu178 lines the Zn(2+) pocket. Asn271 carries an N-linked (GlcNAc...) asparagine glycan.

Belongs to the peptidase M20A family. Zn(2+) is required as a cofactor.

Its subcellular location is the secreted. The sequence is that of Probable carboxypeptidase ACLA_013260 from Aspergillus clavatus (strain ATCC 1007 / CBS 513.65 / DSM 816 / NCTC 3887 / NRRL 1 / QM 1276 / 107).